The primary structure comprises 212 residues: Ribosomal RNA small subunit methyltransferase G (212 aa).

S-adenosyl-L-methionine-binding positions include Gly80, Leu85, Ala131–Glu132, and Arg146.

It belongs to the methyltransferase superfamily. RNA methyltransferase RsmG family.

Its subcellular location is the cytoplasm. It catalyses the reaction guanosine(527) in 16S rRNA + S-adenosyl-L-methionine = N(7)-methylguanosine(527) in 16S rRNA + S-adenosyl-L-homocysteine. Functionally, specifically methylates the N7 position of guanine in position 527 of 16S rRNA. In Xanthomonas campestris pv. campestris (strain B100), this protein is Ribosomal RNA small subunit methyltransferase G.